The chain runs to 598 residues: Thiol:disulfide interchange protein DsbD (598 aa).

An N-terminal signal peptide occupies residues 1–19 (MAYRIITLILLLCSTSATA). An intrachain disulfide couples Cys-122 to Cys-128. The tract at residues 147–187 (DGQATAIEPMPSTSSRPAFNPPLPVEPRPAPELATSPAPAA) is disordered. The span at 165–176 (FNPPLPVEPRPA) shows a compositional bias: pro residues. 7 consecutive transmembrane segments (helical) span residues 197–217 (LPFTALWALLIGIGIAFTPCV), 242–262 (LLAFIYVQGMALTYTALGLVV), 277–297 (YVLVGLSAVFILLALSMFGLF), 330–350 (IAGLICSPCTTAPLSAILLYI), 356–376 (LWLGGGTLYLYALGMGLPLIL), 391–411 (WMSHVKTAFGFVILALPVFLL), and 423–443 (LWSMLGVAFFSWAFITSLGAT). Cys-216 and Cys-338 are joined by a disulfide. The region spanning 459–598 (LVSARPLQDW…FSAHLRDWQA (140 aa)) is the Thioredoxin domain. The cysteines at positions 513 and 516 are disulfide-linked.

It belongs to the thioredoxin family. DsbD subfamily.

Its subcellular location is the cell inner membrane. The enzyme catalyses [protein]-dithiol + NAD(+) = [protein]-disulfide + NADH + H(+). It carries out the reaction [protein]-dithiol + NADP(+) = [protein]-disulfide + NADPH + H(+). Required to facilitate the formation of correct disulfide bonds in some periplasmic proteins and for the assembly of the periplasmic c-type cytochromes. Acts by transferring electrons from cytoplasmic thioredoxin to the periplasm. This transfer involves a cascade of disulfide bond formation and reduction steps. In Klebsiella pneumoniae subsp. pneumoniae (strain ATCC 700721 / MGH 78578), this protein is Thiol:disulfide interchange protein DsbD.